The chain runs to 509 residues: ATP synthase subunit alpha (509 aa).

169–176 (GDRQTGKT) is an ATP binding site.

It belongs to the ATPase alpha/beta chains family. As to quaternary structure, F-type ATPases have 2 components, CF(1) - the catalytic core - and CF(0) - the membrane proton channel. CF(1) has five subunits: alpha(3), beta(3), gamma(1), delta(1), epsilon(1). CF(0) has three main subunits: a(1), b(2) and c(9-12). The alpha and beta chains form an alternating ring which encloses part of the gamma chain. CF(1) is attached to CF(0) by a central stalk formed by the gamma and epsilon chains, while a peripheral stalk is formed by the delta and b chains.

It localises to the cell inner membrane. The catalysed reaction is ATP + H2O + 4 H(+)(in) = ADP + phosphate + 5 H(+)(out). In terms of biological role, produces ATP from ADP in the presence of a proton gradient across the membrane. The alpha chain is a regulatory subunit. In Sinorhizobium fredii (strain NBRC 101917 / NGR234), this protein is ATP synthase subunit alpha.